We begin with the raw amino-acid sequence, 315 residues long: Eukaryotic translation initiation factor 2 subunit 1 (315 aa).

Residues 17–88 (EDVVMVNVRS…EKGYIDLSKR (72 aa)) form the S1 motif domain. Serine 49 is subject to Phosphoserine; by HRI. The residue at position 52 (serine 52) is a Phosphoserine. Residue lysine 141 is modified to N6-acetyllysine. Serine 158 is modified (phosphoserine). Phosphothreonine occurs at positions 279 and 281. The tract at residues 293 to 315 (LERENAEVDGDDDAEEMEAKAED) is disordered. A compositionally biased stretch (acidic residues) spans 299-308 (EVDGDDDAEE).

Belongs to the eIF-2-alpha family. In terms of assembly, eukaryotic translation initiation factor 2 eIF2 is a heterotrimeric complex composed of an alpha (EIF2S1), a beta (EIF2S2) and a gamma (EIF2S3) chain. eIF2 is member of the 43S pre-initiation complex (43S PIC). eIF2 forms a complex with at least CELF1/CUGBP1, CALR, CALR3, EIF2S1, EIF2S2, HSP90B1 and HSPA5. Interaction with METAP2 protects EIF2S1 from inhibitory phosphorylation. Interacts with ABCF1. Associates with ribosomes. Interacts with DDX3X in an RNA-independent manner. Phosphorylation at Ser-49 and Ser-52 stabilizes the eIF-2/GDP/eIF2B complex and prevents GDP/GTP exchange reaction, thus impairing the recycling of eIF-2 between successive rounds of initiation and leading to global inhibition of translation, while concomitantly initiating the preferential translation of integrated stress response (ISR)-specific mRNAs. Substrate for at least 4 kinases: EIF2AK1/HRI, EIF2AK2/PKR, EIF2AK3/PERK and EIF2AK4/GCN2. Phosphorylation on Ser-52 by the EIF2AK4/GCN2 protein kinase occurs in response to amino acid starvation and UV irradiation. Phosphorylation at Ser-52 by the EIF2AK3/PERK protein kinase occurs in response to the unfolded protein response. Phosphorylation at Ser-52 by EIF2AK1/HRI in response to mitochondrial damage promotes relocalization to the mitochondrial surface.

It localises to the cytoplasm. It is found in the stress granule. The protein localises to the cytosol. Its subcellular location is the mitochondrion. With respect to regulation, activity is regulated by phosphorylation at Ser-49 and Ser-52, which stabilizes the eIF2/GDP/eIF2B complex and prevents the eIF2B-mediated exchange of GDP for GTP, thereby preventing the formation of the 43S pre-initiation complex (43S PIC). This results in the global attenuation of 5' cap-dependent protein synthesis and concomitant translation of ISR-specific mRNAs that contain a short upstream open reading frame (uORF) in their 5' UTR, such as ATF4, ATF5, DDIT3/CHOP and PPP1R15A/GADD34. Functionally, member of the eIF2 complex that functions in the early steps of protein synthesis by forming a ternary complex with GTP and initiator tRNA. This complex binds to a 40S ribosomal subunit, followed by mRNA binding to form a 43S pre-initiation complex. Junction of the 60S ribosomal subunit to form the 80S initiation complex is preceded by hydrolysis of the GTP bound to eIF2 and release of an eIF2-GDP binary complex. In order for eIF2 to recycle and catalyze another round of initiation, the GDP bound to eIF2 must exchange with GTP by way of a reaction catalyzed by eIF2B. EIF2S1/eIF2-alpha is a key component of the integrated stress response (ISR), required for adaptation to various stress: phosphorylation by metabolic-stress sensing protein kinases (EIF2AK1/HRI, EIF2AK2/PKR, EIF2AK3/PERK and EIF2AK4/GCN2) in response to stress converts EIF2S1/eIF2-alpha in a global protein synthesis inhibitor, leading to a attenuation of cap-dependent translation, while concomitantly initiating the preferential translation of ISR-specific mRNAs, such as the transcriptional activators ATF4 and QRICH1, and hence allowing ATF4- and QRICH1-mediated reprogramming. EIF2S1/eIF2-alpha also acts as an activator of mitophagy in response to mitochondrial damage: phosphorylation by EIF2AK1/HRI promotes relocalization to the mitochondrial surface, thereby triggering PRKN-independent mitophagy. The polypeptide is Eukaryotic translation initiation factor 2 subunit 1 (EIF2S1) (Pongo abelii (Sumatran orangutan)).